Here is a 482-residue protein sequence, read N- to C-terminus: Proline--tRNA ligase (482 aa).

It belongs to the class-II aminoacyl-tRNA synthetase family. ProS type 3 subfamily. As to quaternary structure, homodimer.

It is found in the cytoplasm. It carries out the reaction tRNA(Pro) + L-proline + ATP = L-prolyl-tRNA(Pro) + AMP + diphosphate. Its function is as follows. Catalyzes the attachment of proline to tRNA(Pro) in a two-step reaction: proline is first activated by ATP to form Pro-AMP and then transferred to the acceptor end of tRNA(Pro). This Mycoplasmopsis synoviae (strain 53) (Mycoplasma synoviae) protein is Proline--tRNA ligase.